A 326-amino-acid polypeptide reads, in one-letter code: Peroxidase 43 (326 aa).

Residues 1 to 24 (MVWANAKMRLALSLVTVFFGISLA) form the signal peptide. Disulfide bonds link Cys-35–Cys-112, Cys-68–Cys-73, Cys-118–Cys-322, and Cys-196–Cys-228. His-66 functions as the Proton acceptor in the catalytic mechanism. Residues Asp-67, Val-70, Gly-72, Asp-74, and Ser-76 each contribute to the Ca(2+) site. Asn-151 carries an N-linked (GlcNAc...) asparagine glycan. Pro-159 provides a ligand contact to substrate. His-189 lines the heme b pocket. Residue Thr-190 coordinates Ca(2+). Asp-241, Ser-244, and Asp-249 together coordinate Ca(2+).

It belongs to the peroxidase family. Classical plant (class III) peroxidase subfamily. Heme b is required as a cofactor. The cofactor is Ca(2+).

The protein resides in the secreted. It carries out the reaction 2 a phenolic donor + H2O2 = 2 a phenolic radical donor + 2 H2O. Functionally, removal of H(2)O(2), oxidation of toxic reductants, biosynthesis and degradation of lignin, suberization, auxin catabolism, response to environmental stresses such as wounding, pathogen attack and oxidative stress. These functions might be dependent on each isozyme/isoform in each plant tissue. The protein is Peroxidase 43 (PER43) of Arabidopsis thaliana (Mouse-ear cress).